Reading from the N-terminus, the 527-residue chain is F-box-like/WD repeat-containing protein TBL1X (527 aa).

N-acetylserine is present on Ser2. One can recognise a LisH domain in the interval 4–36; that stretch reads TSDEVNFLVYRYLQESGFSHSAFTFGIESHISQ. An F-box-like domain is found at 41-86; that stretch reads GTLVPPAALISILQKGLQYVEAEISINEDGTVFDGRPIESLSLIDA. Position 102 is an N6-acetyllysine (Lys102). Residues 127–164 form a disordered region; it reads TTPAAAAQQNPPKNGEATVNGEENGAHAINNHSKPMEI. WD repeat units lie at residues 180-219, 236-275, 277-316, 319-359, 360-399, 402-450, 453-492, and 494-526; these read GHES…NGGS, PSNK…ASTL, QHKG…AKQQ, FHSA…KTFQ, GHTN…CVHD, AHSK…CIHT, KHQE…LVHS, and RGTG…LDLR. Residue Lys290 forms a Glycyl lysine isopeptide (Lys-Gly) (interchain with G-Cter in SUMO2) linkage.

Belongs to the WD repeat EBI family. Homotetramer; dimer of dimers. Component of the N-Cor repressor complex, at least composed of NCOR1, NCOR2, HDAC3, TBL1X, TBL1R, CORO2A and GPS2. Component of a E3 ubiquitin ligase complex containing UBE2D1, SIAH1, CACYBP/SIP, SKP1, APC and TBL1X. Interacts with GPS2 (when sumoylated); leading to protect GPS2 against degradation by the proteasome. Probably part of other corepressor complexes, that do not contain NCOR1 and NCOR2. Interacts with histones H2B, H3a and H4. Interacts with MECP2; recruits TBL1X to the heterochromatin foci. Interacts with USP44. As to expression, expressed in the cochlea.

It is found in the nucleus. F-box-like protein involved in the recruitment of the ubiquitin/19S proteasome complex to nuclear receptor-regulated transcription units. Plays an essential role in transcription activation mediated by nuclear receptors. Probably acts as integral component of corepressor complexes that mediates the recruitment of the 19S proteasome complex, leading to the subsequent proteasomal degradation of transcription repressor complexes, thereby allowing cofactor exchange. The chain is F-box-like/WD repeat-containing protein TBL1X (Tbl1x) from Mus musculus (Mouse).